A 562-amino-acid polypeptide reads, in one-letter code: MFS-type efflux pump elcC (562 aa).

Transmembrane regions (helical) follow at residues 50 to 70 (WVFL…GAAP), 80 to 100 (VVAG…VAEF), 111 to 131 (GMLG…GGAF), 139 to 159 (LCFY…FLLV), 184 to 204 (LYGL…TQWG), 215 to 235 (IIAL…IEIW), 257 to 277 (IFSF…PLWF), 288 to 308 (SGIH…AAGG), 309 to 329 (MVFG…LAAV), 351 to 371 (VLYG…IQAA), and 383 to 403 (VVIF…QNVF). Residue Asn-448 is glycosylated (N-linked (GlcNAc...) asparagine). The chain crosses the membrane as a helical span at residues 455–475 (FYVAVATAGLSMAGSILIPWL). The disordered stretch occupies residues 515–562 (EIASEDSQSSDIEKVPRNNEVSTYDSQTSEVEKSSVGSTNRKVESIRN). Over residues 533–554 (NEVSTYDSQTSEVEKSSVGSTN) the composition is skewed to polar residues.

This sequence belongs to the major facilitator superfamily. TCR/Tet family.

Its subcellular location is the cell membrane. In terms of biological role, MFS-type efflux pump; part of the gene cluster that mediates the biosynthesis of elsinochrome C, a perelyenequinone phytotoxin structurally similar to cercosporin. This Phaeosphaeria nodorum (strain SN15 / ATCC MYA-4574 / FGSC 10173) (Glume blotch fungus) protein is MFS-type efflux pump elcC.